A 118-amino-acid chain; its full sequence is Fluoride-specific ion channel FluC 2 (118 aa).

Helical transmembrane passes span Met-1–Ile-21, Phe-33–Gly-53, Gly-55–Phe-75, and Thr-93–Met-113. Na(+) is bound by residues Gly-70 and Thr-73.

It belongs to the fluoride channel Fluc/FEX (TC 1.A.43) family.

The protein localises to the cell membrane. The catalysed reaction is fluoride(in) = fluoride(out). Its activity is regulated as follows. Na(+) is not transported, but it plays an essential structural role and its presence is essential for fluoride channel function. Functionally, fluoride-specific ion channel. Important for reducing fluoride concentration in the cell, thus reducing its toxicity. The protein is Fluoride-specific ion channel FluC 2 of Bacillus thuringiensis subsp. konkukian (strain 97-27).